Reading from the N-terminus, the 254-residue chain is Fructose-1,6-bisphosphatase (254 aa).

4 residues coordinate Mg(2+): Glu68, Asp84, Leu86, and Asp87. Residues 87–89 (DGS), Arg171, Ile176, and Arg195 each bind substrate. Asp202 is a binding site for Mg(2+).

The protein belongs to the inositol monophosphatase superfamily. FBPase class 4 family. Homodimer. Mg(2+) is required as a cofactor.

It carries out the reaction beta-D-fructose 1,6-bisphosphate + H2O = beta-D-fructose 6-phosphate + phosphate. Its activity is regulated as follows. Inhibited by Li(+), ADP, ATP and glucose-6-phosphate. Its function is as follows. Catalyzes the conversion of D-fructose 1,6-bisphosphate to D-fructose 6-phosphate. In vitro, also has weak activity with inositol-1-phosphate, glucose-1-phosphate and glycerol-2-phosphate. This is Fructose-1,6-bisphosphatase from Pyrococcus furiosus (strain ATCC 43587 / DSM 3638 / JCM 8422 / Vc1).